The chain runs to 141 residues: Large ribosomal subunit protein uL11 (141 aa).

The protein belongs to the universal ribosomal protein uL11 family. Part of the ribosomal stalk of the 50S ribosomal subunit. Interacts with L10 and the large rRNA to form the base of the stalk. L10 forms an elongated spine to which L12 dimers bind in a sequential fashion forming a multimeric L10(L12)X complex. One or more lysine residues are methylated.

In terms of biological role, forms part of the ribosomal stalk which helps the ribosome interact with GTP-bound translation factors. The polypeptide is Large ribosomal subunit protein uL11 (Latilactobacillus sakei subsp. sakei (strain 23K) (Lactobacillus sakei subsp. sakei)).